We begin with the raw amino-acid sequence, 202 residues long: Holliday junction branch migration complex subunit RuvA (202 aa).

The tract at residues 1–62 (MIGYLRGRLH…EDAMELYGFT (62 aa)) is domain I. The domain II stretch occupies residues 63 to 141 (RPEELHLFTL…KSGLVDGTET (79 aa)). A flexible linker region spans residues 141 to 145 (TEAIP). Positions 146–202 (AGGGDNDEALAALLALGYSREEIGPILARVRQELGNAAPTTAVLQAVLKTFGRGGGD) are domain III.

It belongs to the RuvA family. Homotetramer. Forms an RuvA(8)-RuvB(12)-Holliday junction (HJ) complex. HJ DNA is sandwiched between 2 RuvA tetramers; dsDNA enters through RuvA and exits via RuvB. An RuvB hexamer assembles on each DNA strand where it exits the tetramer. Each RuvB hexamer is contacted by two RuvA subunits (via domain III) on 2 adjacent RuvB subunits; this complex drives branch migration. In the full resolvosome a probable DNA-RuvA(4)-RuvB(12)-RuvC(2) complex forms which resolves the HJ.

The protein localises to the cytoplasm. The RuvA-RuvB-RuvC complex processes Holliday junction (HJ) DNA during genetic recombination and DNA repair, while the RuvA-RuvB complex plays an important role in the rescue of blocked DNA replication forks via replication fork reversal (RFR). RuvA specifically binds to HJ cruciform DNA, conferring on it an open structure. The RuvB hexamer acts as an ATP-dependent pump, pulling dsDNA into and through the RuvAB complex. HJ branch migration allows RuvC to scan DNA until it finds its consensus sequence, where it cleaves and resolves the cruciform DNA. The sequence is that of Holliday junction branch migration complex subunit RuvA from Moorella thermoacetica (strain ATCC 39073 / JCM 9320).